We begin with the raw amino-acid sequence, 306 residues long: Ribonuclease Z (306 aa).

Zn(2+) is bound by residues histidine 63, histidine 65, aspartate 67, histidine 68, histidine 141, aspartate 208, and histidine 266. Aspartate 67 serves as the catalytic Proton acceptor.

It belongs to the RNase Z family. As to quaternary structure, homodimer. Requires Zn(2+) as cofactor.

It carries out the reaction Endonucleolytic cleavage of RNA, removing extra 3' nucleotides from tRNA precursor, generating 3' termini of tRNAs. A 3'-hydroxy group is left at the tRNA terminus and a 5'-phosphoryl group is left at the trailer molecule.. Functionally, zinc phosphodiesterase, which displays some tRNA 3'-processing endonuclease activity. Probably involved in tRNA maturation, by removing a 3'-trailer from precursor tRNA. In Protochlamydia amoebophila (strain UWE25), this protein is Ribonuclease Z.